A 478-amino-acid polypeptide reads, in one-letter code: MYQLAFLRCRYASPIVREARRAFHASRKCQYYIDGPQEPFSPMPGRFPKWASNGDETFGFLKDGANVFIHGGAATPSLLIKELYEYVMSKNLKDIKLFHIHTEGPYPFNDAEGHFRSTSLFTGGNCRKAIQEGRADYTPIFLSEIPLLFRRKHVQLDLALINVTPPDKHGFCSLGPSVDVTRAAIQNATHIVAQVNDQLPLTRGDASIHFSNLTVMRAGSQPCHEMSPRPASEVEDKIGQIIAENLVEDGATLQTGIGAIPDAVLSKLTNHKNLGVHTEMFSDGVVQLVQLGAITNAYKKLRPGKVVSSFVVGTRKVFDFLDNNPMVDMCDVAWVNSPVVIAQNPKPVAINSCIEIDITGQVSSDSIGTTIYSGFGGQVDFLRGAAVSLDGQGKPIIAVPSVTKRNETKIVPHLKLGGGVVTTRAHVHYVVTEYGIAYLFGKNLRQRAHALIQIAHPDHRESLEKAAFDRLKVMPSPL.

A mitochondrion-targeting transit peptide spans 1-30 (MYQLAFLRCRYASPIVREARRAFHASRKCQ). 256 to 260 (GIGAI) is a binding site for CoA. Glu279 functions as the 5-glutamyl coenzyme A thioester intermediate in the catalytic mechanism. Positions 354, 377, and 404 each coordinate CoA.

Belongs to the acetyl-CoA hydrolase/transferase family.

It is found in the mitochondrion. It catalyses the reaction succinyl-CoA + acetate = succinate + acetyl-CoA. The catalysed reaction is propanoyl-CoA + succinate = propanoate + succinyl-CoA. Transferase involved in anaerobic fumarate-respiration in the mitochondria. Catalyzes the transfer of the CoA moiety of acetyl-CoA or propionyl-CoA to succinate, thereby forming acetate and propionate, respectively. Acetate and propionate are the two major metabolic end products in the anaerobic mitochondrial metabolism of F.hepatica. Also displays CoA transferase activities from acetyl-CoA to propionate, acetate and butyrate. The polypeptide is Succinyl-CoA:acetate/propanoyl-CoA:succinate CoA transferase (Fasciola hepatica (Liver fluke)).